Reading from the N-terminus, the 436-residue chain is Methylenetetrahydrofolate--tRNA-(uracil-5-)-methyltransferase TrmFO (436 aa).

Residue Gly9 to Gly14 coordinates FAD.

Belongs to the MnmG family. TrmFO subfamily. The cofactor is FAD.

It is found in the cytoplasm. It carries out the reaction uridine(54) in tRNA + (6R)-5,10-methylene-5,6,7,8-tetrahydrofolate + NADH + H(+) = 5-methyluridine(54) in tRNA + (6S)-5,6,7,8-tetrahydrofolate + NAD(+). The enzyme catalyses uridine(54) in tRNA + (6R)-5,10-methylene-5,6,7,8-tetrahydrofolate + NADPH + H(+) = 5-methyluridine(54) in tRNA + (6S)-5,6,7,8-tetrahydrofolate + NADP(+). Functionally, catalyzes the folate-dependent formation of 5-methyl-uridine at position 54 (M-5-U54) in all tRNAs. The sequence is that of Methylenetetrahydrofolate--tRNA-(uracil-5-)-methyltransferase TrmFO from Acetivibrio thermocellus (strain ATCC 27405 / DSM 1237 / JCM 9322 / NBRC 103400 / NCIMB 10682 / NRRL B-4536 / VPI 7372) (Clostridium thermocellum).